A 1227-amino-acid polypeptide reads, in one-letter code: Multifunctional 2-oxoglutarate metabolism enzyme (1227 aa).

Positions 1–41 are 2-oxoglutarate dehydrogenase E1, N-terminal part; it reads MSSSPSPFGQNEWLVEEMYRKFRDDPSSVDPSWHEFLVDYS. Basic and acidic residues predominate over residues 23–37; sequence RDDPSSVDPSWHEFL. Residues 23–102 are disordered; it reads RDDPSSVDPS…SATPAKGDES (80 aa). The interval 42–88 is linker; that stretch reads PEPTTDSASNGRTTTAAPVTPPTPAPAPAPEPKAAPKPAAKTEAKPA. The segment covering 43–53 has biased composition (polar residues); the sequence is EPTTDSASNGR. Residues 60–76 show a composition bias toward pro residues; the sequence is VTPPTPAPAPAPEPKAA. Low complexity predominate over residues 88 to 97; that stretch reads AKPAKSATPA. The succinyltransferase E2 stretch occupies residues 89–335; it reads KPAKSATPAK…LRTIHQLLLD (247 aa). His-314 acts as the Proton acceptor; for succinyltransferase activity in catalysis. The interval 336–1227 is 2-oxoglutarate dehydrogenase E1, C-terminal part; that stretch reads DDFFDEIFRE…QQEILDTAFG (892 aa). Arg-540 is a thiamine diphosphate binding site. 2 residues coordinate 2-oxoglutarate: His-579 and Ser-604. 6 residues coordinate thiamine diphosphate: Ser-604, Leu-606, Asp-645, Ala-646, Ala-647, and Asn-678. Residue Asp-645 coordinates Mg(2+). Residues Asn-678 and Ile-680 each coordinate Mg(2+). The stretch at 783 to 814 forms a coiled coil; the sequence is DISMKEAEDALRDYQGQLERVFNEVRELEKHE. 2-oxoglutarate is bound at residue His-1020. Residues Thr-1038, Arg-1054, Lys-1089, Ser-1092, Gln-1142, Arg-1149, and Arg-1150 each contribute to the acetyl-CoA site.

Belongs to the 2-oxoacid dehydrogenase family. Kgd subfamily. As to quaternary structure, homodimer. Interacts with the FHA domain of unphosphorylated GarA. The 2-oxoglutarate dehydrogenase (ODH) complex contains multiple copies of three enzymatic components: 2-oxoglutarate dehydrogenase (E1), dihydrolipoamide succinyltransferase (E2) and lipoamide dehydrogenase (E3). The cofactor is Mg(2+). It depends on thiamine diphosphate as a cofactor.

The catalysed reaction is glyoxylate + 2-oxoglutarate + H(+) = 2-hydroxy-3-oxoadipate + CO2. It catalyses the reaction 2-oxoglutarate + H(+) = succinate semialdehyde + CO2. The enzyme catalyses N(6)-[(R)-lipoyl]-L-lysyl-[protein] + 2-oxoglutarate + H(+) = N(6)-[(R)-S(8)-succinyldihydrolipoyl]-L-lysyl-[protein] + CO2. It carries out the reaction N(6)-[(R)-dihydrolipoyl]-L-lysyl-[protein] + succinyl-CoA = N(6)-[(R)-S(8)-succinyldihydrolipoyl]-L-lysyl-[protein] + CoA. It functions in the pathway carbohydrate metabolism; tricarboxylic acid cycle; succinate from 2-oxoglutarate (transferase route): step 1/2. Its pathway is carbohydrate metabolism; tricarboxylic acid cycle; succinyl-CoA from 2-oxoglutarate (dehydrogenase route): step 1/1. With respect to regulation, alpha-ketoglutarate dehydrogenase and decarboxylase activities are inhibited by unphosphorylated GarA, and allosterically activated by acetyl-CoA, the main substrate of the TCA cycle. Both the phosphoadenosine and acetyl moieties of acetyl-CoA are important for activation because neither CoA nor the synthetic compound S-(2-acetamidoethyl)-ethanethioate (which mimics the terminal acetyl-phosphopantetheine group of acetyl-CoA) has an activation effect. Its function is as follows. Shows three enzymatic activities that share a first common step, the attack of thiamine-PP on 2-oxoglutarate (alpha-ketoglutarate, KG), leading to the formation of an enamine-thiamine-PP intermediate upon decarboxylation. Thus, displays KGD activity, catalyzing the decarboxylation from five-carbon 2-oxoglutarate to four-carbon succinate semialdehyde (SSA). Also catalyzes C-C bond formation between the activated aldehyde formed after decarboxylation of alpha-ketoglutarate and the carbonyl of glyoxylate (GLX), to yield 2-hydroxy-3-oxoadipate (HOA), which spontaneously decarboxylates to form 5-hydroxylevulinate (HLA). And is also a component of the 2-oxoglutarate dehydrogenase (ODH) complex, that catalyzes the overall conversion of 2-oxoglutarate to succinyl-CoA and CO(2). The KG decarboxylase and KG dehydrogenase reactions provide two alternative, tightly regulated, pathways connecting the oxidative and reductive branches of the TCA cycle. In Mycolicibacterium smegmatis (strain ATCC 700084 / mc(2)155) (Mycobacterium smegmatis), this protein is Multifunctional 2-oxoglutarate metabolism enzyme (kgd).